We begin with the raw amino-acid sequence, 323 residues long: UPF0612 protein C569.01c (323 aa).

2 coiled-coil regions span residues 27 to 63 and 131 to 225; these read IKRY…MKYE and NEMN…DARS.

Belongs to the UPF0612 family.

This chain is UPF0612 protein C569.01c, found in Schizosaccharomyces pombe (strain 972 / ATCC 24843) (Fission yeast).